The following is a 160-amino-acid chain: Serine-protein kinase RsbW (160 aa).

This sequence belongs to the anti-sigma-factor family.

It carries out the reaction L-seryl-[protein] + ATP = O-phospho-L-seryl-[protein] + ADP + H(+). The enzyme catalyses L-threonyl-[protein] + ATP = O-phospho-L-threonyl-[protein] + ADP + H(+). Negative regulator of sigma-B activity. Phosphorylates and inactivates its specific antagonist protein, RsbV. Upon phosphorylation of RsbV, RsbW is released and binds to sigma-B, thereby blocking its ability to form an RNA polymerase holoenzyme (E-sigma-B). The polypeptide is Serine-protein kinase RsbW (Bacillus cereus (strain B4264)).